The primary structure comprises 176 residues: ATP synthase subunit b, chloroplastic (176 aa).

A helical membrane pass occupies residues I27 to L49.

The protein belongs to the ATPase B chain family. As to quaternary structure, F-type ATPases have 2 components, F(1) - the catalytic core - and F(0) - the membrane proton channel. F(1) has five subunits: alpha(3), beta(3), gamma(1), delta(1), epsilon(1). F(0) has four main subunits: a(1), b(1), b'(1) and c(10-14). The alpha and beta chains form an alternating ring which encloses part of the gamma chain. F(1) is attached to F(0) by a central stalk formed by the gamma and epsilon chains, while a peripheral stalk is formed by the delta, b and b' chains.

It localises to the plastid. The protein localises to the chloroplast thylakoid membrane. In terms of biological role, f(1)F(0) ATP synthase produces ATP from ADP in the presence of a proton or sodium gradient. F-type ATPases consist of two structural domains, F(1) containing the extramembraneous catalytic core and F(0) containing the membrane proton channel, linked together by a central stalk and a peripheral stalk. During catalysis, ATP synthesis in the catalytic domain of F(1) is coupled via a rotary mechanism of the central stalk subunits to proton translocation. Its function is as follows. Component of the F(0) channel, it forms part of the peripheral stalk, linking F(1) to F(0). The protein is ATP synthase subunit b, chloroplastic of Nephroselmis olivacea (Green alga).